A 296-amino-acid polypeptide reads, in one-letter code: Nucleotide-binding protein Spy49_0545 (296 aa).

An ATP-binding site is contributed by 13–20 (GMSGAGKT). Position 63 to 66 (63 to 66 (DMRS)) interacts with GTP.

This sequence belongs to the RapZ-like family.

Its function is as follows. Displays ATPase and GTPase activities. The protein is Nucleotide-binding protein Spy49_0545 of Streptococcus pyogenes serotype M49 (strain NZ131).